The following is a 618-amino-acid chain: Isocitrate dehydrogenase kinase/phosphatase (618 aa).

ATP is bound by residues 332-338 and Lys-353; that span reads APGIKGM. Asp-388 is a catalytic residue.

Belongs to the AceK family.

The protein resides in the cytoplasm. The catalysed reaction is L-seryl-[isocitrate dehydrogenase] + ATP = O-phospho-L-seryl-[isocitrate dehydrogenase] + ADP + H(+). Functionally, bifunctional enzyme which can phosphorylate or dephosphorylate isocitrate dehydrogenase (IDH) on a specific serine residue. This is a regulatory mechanism which enables bacteria to bypass the Krebs cycle via the glyoxylate shunt in response to the source of carbon. When bacteria are grown on glucose, IDH is fully active and unphosphorylated, but when grown on acetate or ethanol, the activity of IDH declines drastically concomitant with its phosphorylation. This chain is Isocitrate dehydrogenase kinase/phosphatase, found in Methylibium petroleiphilum (strain ATCC BAA-1232 / LMG 22953 / PM1).